A 97-amino-acid polypeptide reads, in one-letter code: U6-theraphotoxin-Hhn1a 3 (97 aa).

Positions 1 to 33 (MLIKQFSRRSKNTKVQILLAFAALFVLAVGSYA) are cleaved as a signal peptide. A propeptide spanning residues 34–61 (SESKKLDLRDALFSAMFSADYQLNPQER) is cleaved from the precursor. 3 cysteine pairs are disulfide-bonded: Cys63-Cys77, Cys70-Cys82, and Cys76-Cys89.

This sequence belongs to the neurotoxin 10 (Hwtx-1) family. 12 (Hntx-12) subfamily. In terms of tissue distribution, expressed by the venom gland.

It is found in the secreted. Ion channel inhibitor. This chain is U6-theraphotoxin-Hhn1a 3, found in Cyriopagopus hainanus (Chinese bird spider).